A 373-amino-acid polypeptide reads, in one-letter code: 3 beta-hydroxysteroid dehydrogenase/Delta 5--&gt;4-isomerase (373 aa).

Tyr-155 (proton acceptor) is an active-site residue. Lys-159 provides a ligand contact to NAD(+). A helical transmembrane segment spans residues 288 to 308 (ISLEYWLAFLLEIVSFLLSPI).

This sequence belongs to the 3-beta-HSD family.

It is found in the endoplasmic reticulum membrane. The protein resides in the mitochondrion membrane. It catalyses the reaction a 3beta-hydroxy-Delta(5)-steroid + NAD(+) = a 3-oxo-Delta(5)-steroid + NADH + H(+). It carries out the reaction a 3-oxo-Delta(5)-steroid = a 3-oxo-Delta(4)-steroid. It participates in lipid metabolism; steroid biosynthesis. Functionally, 3-beta-HSD is a bifunctional enzyme, that catalyzes the oxidative conversion of Delta(5)-ene-3-beta-hydroxy steroid, and the oxidative conversion of ketosteroids. The 3-beta-HSD enzymatic system plays a crucial role in the biosynthesis of all classes of hormonal steroids. The polypeptide is 3 beta-hydroxysteroid dehydrogenase/Delta 5--&gt;4-isomerase (HSD3B) (Canis lupus familiaris (Dog)).